Consider the following 320-residue polypeptide: Ferrochelatase (320 aa).

2 residues coordinate Fe cation: His-194 and Glu-275.

The protein belongs to the ferrochelatase family. Monomer.

It localises to the cytoplasm. It catalyses the reaction heme b + 2 H(+) = protoporphyrin IX + Fe(2+). It participates in porphyrin-containing compound metabolism; protoheme biosynthesis; protoheme from protoporphyrin-IX: step 1/1. Its function is as follows. Catalyzes the ferrous insertion into protoporphyrin IX. This chain is Ferrochelatase, found in Salmonella typhi.